A 305-amino-acid chain; its full sequence is 2-methoxy-6-polyprenyl-1,4-benzoquinol methylase, mitochondrial (305 aa).

The transit peptide at 1–34 directs the protein to the mitochondrion; the sequence is MSRLRAPVAKFLADGLKGIRSTALAGSRLSNCRY. S-adenosyl-L-methionine is bound by residues Thr-117, Asp-143, and 173 to 174; that span reads NA.

The protein belongs to the class I-like SAM-binding methyltransferase superfamily. MenG/UbiE family. As to quaternary structure, component of a multi-subunit COQ enzyme complex, composed of at least COQ3, COQ4, COQ5, COQ6, COQ7 and COQ9.

Its subcellular location is the mitochondrion inner membrane. The catalysed reaction is 2-methoxy-6-(all-trans-decaprenyl)benzene-1,4-diol + S-adenosyl-L-methionine = 5-methoxy-2-methyl-3-(all-trans-decaprenyl)benzene-1,4-diol + S-adenosyl-L-homocysteine + H(+). The protein operates within cofactor biosynthesis; ubiquinone biosynthesis. In terms of biological role, methyltransferase required for the conversion of 2-decaprenyl-6-methoxy-1,4-benzoquinol (DDMQH2) to 2-decaprenyl-3-methyl-6-methoxy-1,4-benzoquinol (DMQH2). The sequence is that of 2-methoxy-6-polyprenyl-1,4-benzoquinol methylase, mitochondrial from Schizosaccharomyces pombe (strain 972 / ATCC 24843) (Fission yeast).